Consider the following 658-residue polypeptide: MDIATNFITRSLSEIAPNASQSSLHVTPSSVSNNAFGLKLRQLISDTYCPHIFIMASDDTENFMKRKGFDDFASFIRPFGDRIFQSSTNNSAISKETLDSRIFDNDHDSIRFVPMEAVQVPRQWKRNKAWNTENGLENCANSRFAPGGDIDSFRVLSQKLIEEWVQSGSNNYPENGFLNPILDYLKLLLSGNPVAEHETFSHPVGCLIVITSHNTNPMATVMRLFKEINNAPFPNFISKEILHYYLFIHDEDNNDLSNSKQIFQQMRRSLGANSHFIRLRSNYISAKPLDTDRYDTSSIQSLKNAPRDSMESESFCSSSDDAKPITFVTKNLRKFPIPEWRSSLEVQAESEQSCLPLYPLLPVEEVEGMKKFVQTMLYDSIYPFMQRCVRAWEEDLTPQYGNLTTRLLFASKKYWSRNHSSHSQGNYDPLSLIYSSEKQESIKRKMADFSFMLRDYKRAYEIYDEIRNTFSQDKAWNYLASCEEIQIICLLMQNRNISLKSQISYLNKWFDEMVYIYAVRLHSFYYTFRSVLVTSLLLSLKPAFSIDFAASWLAKILEPGPISLNPFETSFLNTTIAGMYSNKEHVGVTDGNRRRKAAFWFAYSAGFWRDCGHCKMAEICWNLANRVYSKSGWESLSEHMLDLKPTLSENFRVKNTFH.

This sequence belongs to the TRS85 family. In terms of assembly, part of the multisubunit TRAPP (transport protein particle) complexes I and II.

Its subcellular location is the golgi apparatus. It localises to the cis-Golgi network. Component of the TRAPP I and TRAPP II complexes. TRAPP I plays a key role in the late stages of endoplasmic reticulum to Golgi traffic. TRAPP II seems to play a role in intra-Golgi transport. Has a role late in meiosis following DNA replication. The polypeptide is Transport protein particle subunit trs85-1 (trs85-1) (Schizosaccharomyces pombe (strain 972 / ATCC 24843) (Fission yeast)).